The sequence spans 238 residues: Enoyl-CoA delta isomerase 3 (238 aa).

The protein belongs to the enoyl-CoA hydratase/isomerase family.

It localises to the cytoplasm. It is found in the nucleus. The enzyme catalyses a (3Z)-enoyl-CoA = a 4-saturated (2E)-enoyl-CoA. It carries out the reaction a (3E)-enoyl-CoA = a 4-saturated (2E)-enoyl-CoA. Its pathway is lipid metabolism; fatty acid beta-oxidation. Functionally, able to isomerize both 3-cis and 3-trans double bonds into the 2-trans form in a range of enoyl-CoA species. Essential for the beta oxidation of unsaturated fatty acids. The polypeptide is Enoyl-CoA delta isomerase 3 (Arabidopsis thaliana (Mouse-ear cress)).